The following is a 126-amino-acid chain: Small ribosomal subunit protein uS12 (126 aa).

A 3-methylthioaspartic acid modification is found at Asp89.

It belongs to the universal ribosomal protein uS12 family. Part of the 30S ribosomal subunit. Contacts proteins S8 and S17. May interact with IF1 in the 30S initiation complex.

Its function is as follows. With S4 and S5 plays an important role in translational accuracy. Interacts with and stabilizes bases of the 16S rRNA that are involved in tRNA selection in the A site and with the mRNA backbone. Located at the interface of the 30S and 50S subunits, it traverses the body of the 30S subunit contacting proteins on the other side and probably holding the rRNA structure together. The combined cluster of proteins S8, S12 and S17 appears to hold together the shoulder and platform of the 30S subunit. The sequence is that of Small ribosomal subunit protein uS12 from Polynucleobacter necessarius subsp. necessarius (strain STIR1).